We begin with the raw amino-acid sequence, 601 residues long: N-acetyltransferase ESCO2 (601 aa).

Residues Ser-29, Ser-75, Ser-223, and Ser-244 each carry the phosphoserine modification. The tract at residues 222–243 (SSLENEPSLGRTQKSKSEVIED) is disordered. Positions 282-305 (KEKLIKDSSDDRVSSKEHKVDKNE) are enriched in basic and acidic residues. The interval 282–315 (KEKLIKDSSDDRVSSKEHKVDKNEAFSSEDSLGE) is disordered. Positions 306–315 (AFSSEDSLGE) are enriched in polar residues. Ser-312 carries the phosphoserine modification. A CCHH-type zinc finger spans residues 387–411 (TVCKSCGMIYTASNPEDEMQHVQHH). Ser-512 carries the phosphoserine modification.

This sequence belongs to the acetyltransferase family. ECO subfamily. As to expression, widely expressed in fetal tissues. In adult, it is expressed in thymus, placenta and small intestine.

It localises to the nucleus. Its subcellular location is the chromosome. It carries out the reaction L-lysyl-[protein] + acetyl-CoA = N(6)-acetyl-L-lysyl-[protein] + CoA + H(+). In terms of biological role, acetyltransferase required for the establishment of sister chromatid cohesion. Couples the processes of cohesion and DNA replication to ensure that only sister chromatids become paired together. In contrast to the structural cohesins, the deposition and establishment factors are required only during the S phase. Acetylates the cohesin component SMC3. The chain is N-acetyltransferase ESCO2 from Homo sapiens (Human).